We begin with the raw amino-acid sequence, 138 residues long: MRVTQGTFCYLPDLTDEQIRKQIQYAINQGWAVSVEYTDDPHPRNSYWEMWGLPLFDVKDPATIMFEVQECRKQFPNHYIKVLAFNSTKGIESTALSFIVNRPANEPGFVLRRIESNDRVQRYQIHSYATEKPEGSRY.

This sequence belongs to the RuBisCO small chain family. Heterohexadecamer of 8 large and 8 small subunits.

It localises to the plastid. Its subcellular location is the chloroplast. RuBisCO catalyzes two reactions: the carboxylation of D-ribulose 1,5-bisphosphate, the primary event in carbon dioxide fixation, as well as the oxidative fragmentation of the pentose substrate in the photorespiration process. Both reactions occur simultaneously and in competition at the same active site. Although the small subunit is not catalytic it is essential for maximal activity. The polypeptide is Ribulose bisphosphate carboxylase small subunit (Cyanidioschyzon merolae (strain NIES-3377 / 10D) (Unicellular red alga)).